The following is an 82-amino-acid chain: Putative membrane protein insertion efficiency factor (82 aa).

The protein belongs to the UPF0161 family.

It is found in the cell inner membrane. Its function is as follows. Could be involved in insertion of integral membrane proteins into the membrane. The polypeptide is Putative membrane protein insertion efficiency factor (Rickettsia typhi (strain ATCC VR-144 / Wilmington)).